Reading from the N-terminus, the 558-residue chain is MPLPFEEFQGKGISCFSSFSSSFPQPPSSPLLSHRKARGGEEEEEEVPAAEPTSVLDSLISPTSSSTVSSSHGGNSAVGGGGDATTDEQCGAIGLGDWEEQVPHDHEQSILGLIMGDSTDPSLELNSILQTSPTFHDSDYSSPGFGVVDTGFGLDHHSVPPSHVSGLLINQSQTHYTQNPAAIFYGHHHHTPPPAKRLNPGPVGITEQLVKAAEVIESDTCLAQGILARLNQQLSSPVGKPLERAAFYFKEALNNLLHNVSQTLNPYSLIFKIAAYKSFSEISPVLQFANFTSNQALLESFHGFHRLHIIDFDIGYGGQWASLMQELVLRDNAAPLSLKITVFASPANHDQLELGFTQDNLKHFASEINISLDIQVLSLDLLGSISWPNSSEKEAVAVNISAASFSHLPLVLRFVKHLSPTIIVCSDRGCERTDLPFSQQLAHSLHSHTALFESLDAVNANLDAMQKIERFLIQPEIEKLVLDRSRPIERPMMTWQAMFLQMGFSPVTHSNFTESQAECLVQRTPVRGFHVEKKHNSLLLCWQRTELVGVSAWRCRSS.

The tract at residues 19-90 (FSSSFPQPPS…GGDATTDEQC (72 aa)) is disordered. The span at 54–75 (SVLDSLISPTSSSTVSSSHGGN) shows a compositional bias: low complexity. Residues 196–554 (KRLNPGPVGI…TELVGVSAWR (359 aa)) enclose the GRAS domain. A leucine repeat I (LRI) region spans residues 203-257 (VGITEQLVKAAEVIESDTCLAQGILARLNQQLSSPVGKPLERAAFYFKEALNNLL). The interval 276–340 (YKSFSEISPV…DNAAPLSLKI (65 aa)) is VHIID. Residues 307–311 (LHIID) carry the VHIID motif. Residues 356–388 (FTQDNLKHFASEINISLDIQVLSLDLLGSISWP) form a leucine repeat II (LRII) region. The PFYRE stretch occupies residues 396-479 (VAVNISAASF…RFLIQPEIEK (84 aa)). The interval 482–554 (LDRSRPIERP…TELVGVSAWR (73 aa)) is SAW.

This sequence belongs to the GRAS family. In terms of assembly, interacts with Meloidogyne incognita 16D10. In terms of tissue distribution, expressed in seedlings, roots, leaves, flowers and siliques.

The protein resides in the nucleus. Its function is as follows. Probable transcription factor involved in plant development. The protein is Scarecrow-like protein 6 (SCL6) of Arabidopsis thaliana (Mouse-ear cress).